A 276-amino-acid polypeptide reads, in one-letter code: Malectin-B (276 aa).

The N-terminal stretch at 1-26 (MLSIRTVLGPLAAILLTVIGPFGAHG) is a signal peptide. At 27-253 (SGLADKVMWA…TPNPYASDNS (227 aa)) the chain is on the lumenal side. A carbohydrate contacts are provided by tyrosine 67, tyrosine 89, tyrosine 116, phenylalanine 117, and aspartate 186. Residues 202 to 249 (DVPQLQPHPGLEKKEEEEEEEEEEGSPSKKQSNKNRVQSGPRTPNPYA) are disordered. A compositionally biased stretch (acidic residues) spans 216-226 (EEEEEEEEEEG). Positions 229-249 (SKKQSNKNRVQSGPRTPNPYA) are enriched in polar residues. A glycan (N-linked (GlcNAc...) asparagine) is linked at asparagine 252. A helical transmembrane segment spans residues 254 to 274 (SLMFPILVAFGVFIPTLFCLC). Topologically, residues 275-276 (RL) are cytoplasmic.

It belongs to the malectin family.

The protein resides in the endoplasmic reticulum membrane. Carbohydrate-binding protein with a strong ligand preference for Glc2-N-glycan. May play a role in the early steps of protein N-glycosylation. Can bind di- or higher oligomers but not monomers of glucose, including maltose, maltotriose, maltotetraose, maltoheptaose, nigerose, kojibose, cellobiose and isomaltose, although based on their subcellular locations, these are unlikely to all be physiological ligands. The protein is Malectin-B of Xenopus laevis (African clawed frog).